Consider the following 121-residue polypeptide: Small ribosomal subunit protein uS13 (121 aa).

The segment at 91-121 (HRRGLPVRGQNTKNNARTRKGKKASMAGKKK) is disordered. A compositionally biased stretch (basic residues) spans 106–121 (ARTRKGKKASMAGKKK).

It belongs to the universal ribosomal protein uS13 family. In terms of assembly, part of the 30S ribosomal subunit. Forms a loose heterodimer with protein S19. Forms two bridges to the 50S subunit in the 70S ribosome.

In terms of biological role, located at the top of the head of the 30S subunit, it contacts several helices of the 16S rRNA. In the 70S ribosome it contacts the 23S rRNA (bridge B1a) and protein L5 of the 50S subunit (bridge B1b), connecting the 2 subunits; these bridges are implicated in subunit movement. Contacts the tRNAs in the A and P-sites. This chain is Small ribosomal subunit protein uS13, found in Lacticaseibacillus paracasei (strain ATCC 334 / BCRC 17002 / CCUG 31169 / CIP 107868 / KCTC 3260 / NRRL B-441) (Lactobacillus paracasei).